Here is a 564-residue protein sequence, read N- to C-terminus: Probable diguanylate cyclase DgcQ (564 aa).

A run of 2 helical transmembrane segments spans residues 20-40 (LGPGHIVNLCFIVVLLFSTLL) and 360-380 (IALTLLWALFTTMLLISWYVI). The GGDEF domain occupies 428-563 (HPFSVIQVDL…GRNRVFASDN (136 aa)). Aspartate 436 contacts Mg(2+). The substrate site is built by asparagine 444, histidine 449, and aspartate 453. Glutamate 479 contacts Mg(2+). Glutamate 479 functions as the Proton acceptor in the catalytic mechanism.

Homodimer. Requires Mg(2+) as cofactor.

It localises to the cell inner membrane. The enzyme catalyses 2 GTP = 3',3'-c-di-GMP + 2 diphosphate. It functions in the pathway glycan metabolism; bacterial cellulose biosynthesis. Its pathway is purine metabolism; 3',5'-cyclic di-GMP biosynthesis. Its function is as follows. Catalyzes the synthesis of cyclic-di-GMP (c-di-GMP) via the condensation of 2 GTP molecules. Cyclic-di-GMP is a second messenger which controls cell surface-associated traits in bacteria. Involved in the regulation of cellulose production. This chain is Probable diguanylate cyclase DgcQ, found in Shigella dysenteriae serotype 1 (strain Sd197).